The sequence spans 329 residues: NADH-quinone oxidoreductase subunit H (329 aa).

The next 8 membrane-spanning stretches (helical) occupy residues 11 to 31 (IVVA…CGAL), 81 to 101 (LIFT…FAVV), 114 to 134 (IGLL…LFAG), 154 to 174 (ISYE…TGSF), 187 to 207 (TWFI…GVAV), 238 to 258 (FFVG…TLFF), 270 to 290 (QLSF…FILL), and 309 to 329 (FCLP…LAAQ).

It belongs to the complex I subunit 1 family. NDH-1 is composed of 13 different subunits. Subunits NuoA, H, J, K, L, M, N constitute the membrane sector of the complex.

Its subcellular location is the cell inner membrane. It catalyses the reaction a quinone + NADH + 5 H(+)(in) = a quinol + NAD(+) + 4 H(+)(out). Functionally, NDH-1 shuttles electrons from NADH, via FMN and iron-sulfur (Fe-S) centers, to quinones in the respiratory chain. The immediate electron acceptor for the enzyme in this species is believed to be ubiquinone. Couples the redox reaction to proton translocation (for every two electrons transferred, four hydrogen ions are translocated across the cytoplasmic membrane), and thus conserves the redox energy in a proton gradient. This subunit may bind ubiquinone. This chain is NADH-quinone oxidoreductase subunit H, found in Azotobacter vinelandii (strain DJ / ATCC BAA-1303).